We begin with the raw amino-acid sequence, 297 residues long: Hydroxysqualene synthase (297 aa).

Belongs to the phytoene/squalene synthase family. HpnC subfamily.

It catalyses the reaction presqualene diphosphate + H2O = hydroxysqualene + diphosphate. The protein operates within secondary metabolite biosynthesis; hopanoid biosynthesis. Its function is as follows. Involved in the biosynthesis of the hopanoid precursor squalene (SQ) from farnesyl diphosphate (FPP). Catalyzes the second step, the conversion of presqualene diphosphate (PSPP) to hydroxysqualene (HSQ). The chain is Hydroxysqualene synthase from Zymomonas mobilis subsp. mobilis (strain ATCC 31821 / ZM4 / CP4).